The sequence spans 273 residues: Cell division protein FtsQ (273 aa).

Residues 1–10 lie on the Cytoplasmic side of the membrane; it reads MWNDARTINL. A helical membrane pass occupies residues 11 to 31; that stretch reads IANTLAVLAVAAMLLAGVAWV. The Periplasmic portion of the chain corresponds to 32-273; it reads AQRPYFTLAA…HSKSKPAKKR (242 aa). A POTRA domain is found at 37–110; it reads FTLAAIEIES…NTLRVRVEEQ (74 aa).

The protein belongs to the FtsQ/DivIB family. FtsQ subfamily. Part of a complex composed of FtsB, FtsL and FtsQ.

The protein resides in the cell inner membrane. Essential cell division protein. May link together the upstream cell division proteins, which are predominantly cytoplasmic, with the downstream cell division proteins, which are predominantly periplasmic. May control correct divisome assembly. The sequence is that of Cell division protein FtsQ from Bordetella pertussis (strain Tohama I / ATCC BAA-589 / NCTC 13251).